A 92-amino-acid chain; its full sequence is Small ribosomal subunit protein uS19c (92 aa).

It belongs to the universal ribosomal protein uS19 family.

The protein resides in the plastid. The protein localises to the chloroplast. In terms of biological role, protein S19 forms a complex with S13 that binds strongly to the 16S ribosomal RNA. This Pinus koraiensis (Korean pine) protein is Small ribosomal subunit protein uS19c.